The primary structure comprises 624 residues: DNA-directed RNA polymerase subunit gamma (624 aa).

Zn(2+) contacts are provided by Cys-70, Cys-72, Cys-85, and Cys-88. Residues Asp-466, Asp-468, and Asp-470 each contribute to the Mg(2+) site.

It belongs to the RNA polymerase beta' chain family. RpoC1 subfamily. In cyanobacteria the RNAP catalytic core is composed of 2 alpha, 1 beta, 1 beta', 1 gamma and 1 omega subunit. When a sigma factor is associated with the core the holoenzyme is formed, which can initiate transcription. Requires Mg(2+) as cofactor. It depends on Zn(2+) as a cofactor.

It carries out the reaction RNA(n) + a ribonucleoside 5'-triphosphate = RNA(n+1) + diphosphate. Its function is as follows. DNA-dependent RNA polymerase catalyzes the transcription of DNA into RNA using the four ribonucleoside triphosphates as substrates. This Synechococcus elongatus (strain ATCC 33912 / PCC 7942 / FACHB-805) (Anacystis nidulans R2) protein is DNA-directed RNA polymerase subunit gamma.